The following is a 118-amino-acid chain: MRVSQRLGRFGEDVAARHLSADGAEILARNWRCRDGEIDIVARHGDTLVFCEVKTRSGADYGSGPDAVVGRKAARIRRLAVRWLAEHPHPPAIIRFDVLSVYRERQGSVRVEHRRGAF.

The protein belongs to the UPF0102 family.

This Parafrankia sp. (strain EAN1pec) protein is UPF0102 protein Franean1_1156.